Consider the following 470-residue polypeptide: Flavin-containing monooxygenase FMO GS-OX-like 6 (470 aa).

FAD is bound at residue Gly17 to Gly22. An NADP(+)-binding site is contributed by Gly214–Gly219.

Belongs to the FMO family. FAD is required as a cofactor.

Functionally, catalyzes the conversion of methylthioalkyl glucosinolates of any chain length into methylsulfinylalkyl glucosinolates. This chain is Flavin-containing monooxygenase FMO GS-OX-like 6, found in Arabidopsis thaliana (Mouse-ear cress).